Reading from the N-terminus, the 350-residue chain is Gene 40 protein (350 aa).

Position 237–244 (237–244 (AVKESGKT)) interacts with ATP.

This Bacillus phage SP01 (Bacteriophage SP01) protein is Gene 40 protein (40).